The primary structure comprises 349 residues: UDP-N-acetylenolpyruvoylglucosamine reductase (349 aa).

In terms of domain architecture, FAD-binding PCMH-type spans 25–213; the sequence is VGPVARRLVT…VEQGERTDPQ (189 aa). R165 is a catalytic residue. S242 functions as the Proton donor in the catalytic mechanism. E341 is an active-site residue.

It belongs to the MurB family. It depends on FAD as a cofactor.

It is found in the cytoplasm. The catalysed reaction is UDP-N-acetyl-alpha-D-muramate + NADP(+) = UDP-N-acetyl-3-O-(1-carboxyvinyl)-alpha-D-glucosamine + NADPH + H(+). It participates in cell wall biogenesis; peptidoglycan biosynthesis. Its function is as follows. Cell wall formation. In Mycolicibacterium gilvum (strain PYR-GCK) (Mycobacterium gilvum (strain PYR-GCK)), this protein is UDP-N-acetylenolpyruvoylglucosamine reductase.